A 675-amino-acid chain; its full sequence is UvrABC system protein B (675 aa).

The Helicase ATP-binding domain maps to 35-422 (EGVSDGLMFQ…ADNVVEQVVR (388 aa)). Residue 48–55 (GVTGSGKT) coordinates ATP. The Beta-hairpin signature appears at 101–124 (YYDYYQPEAYVPTRDLFIEKDSSI). Residues 439–605 (QVDDLLGEIH…GVSKAVRELI (167 aa)) form the Helicase C-terminal domain. In terms of domain architecture, UVR spans 633–668 (AREIRRLEKLMMDHARNLEFEQAAAARDALNALKSR).

Belongs to the UvrB family. In terms of assembly, forms a heterotetramer with UvrA during the search for lesions. Interacts with UvrC in an incision complex.

The protein localises to the cytoplasm. In terms of biological role, the UvrABC repair system catalyzes the recognition and processing of DNA lesions. A damage recognition complex composed of 2 UvrA and 2 UvrB subunits scans DNA for abnormalities. Upon binding of the UvrA(2)B(2) complex to a putative damaged site, the DNA wraps around one UvrB monomer. DNA wrap is dependent on ATP binding by UvrB and probably causes local melting of the DNA helix, facilitating insertion of UvrB beta-hairpin between the DNA strands. Then UvrB probes one DNA strand for the presence of a lesion. If a lesion is found the UvrA subunits dissociate and the UvrB-DNA preincision complex is formed. This complex is subsequently bound by UvrC and the second UvrB is released. If no lesion is found, the DNA wraps around the other UvrB subunit that will check the other stand for damage. In Bordetella bronchiseptica (strain ATCC BAA-588 / NCTC 13252 / RB50) (Alcaligenes bronchisepticus), this protein is UvrABC system protein B.